The following is a 222-amino-acid chain: Cytochrome b6-f complex iron-sulfur subunit, chloroplastic (222 aa).

A chloroplast-targeting transit peptide spans 1 to 49 (MASTALSTASNPTQLCRTRASSLCKPVKGLGFGRERIPRNITCMAGSIS). Residues 66–86 (LLGAISLPTFGMLVPYGSFLV) traverse the membrane as a helical segment. In terms of domain architecture, Rieske spans 109–205 (VEDWLKTHGP…ADVDDGKVVF (97 aa)). Cysteine 151, histidine 153, cysteine 169, and histidine 172 together coordinate [2Fe-2S] cluster. The cysteines at positions 156 and 171 are disulfide-linked.

It belongs to the Rieske iron-sulfur protein family. In terms of assembly, the 4 large subunits of the cytochrome b6-f complex are cytochrome b6, subunit IV (17 kDa polypeptide, petD), cytochrome f and the Rieske protein, while the 4 small subunits are petG, petL, petM and petN. The complex functions as a dimer. [2Fe-2S] cluster serves as cofactor.

It localises to the plastid. Its subcellular location is the chloroplast thylakoid membrane. The enzyme catalyses 2 oxidized [plastocyanin] + a plastoquinol + 2 H(+)(in) = 2 reduced [plastocyanin] + a plastoquinone + 4 H(+)(out). Component of the cytochrome b6-f complex, which mediates electron transfer between photosystem II (PSII) and photosystem I (PSI), cyclic electron flow around PSI, and state transitions. The sequence is that of Cytochrome b6-f complex iron-sulfur subunit, chloroplastic (petC) from Triticum aestivum (Wheat).